Here is a 724-residue protein sequence, read N- to C-terminus: Probable methyltransferase PMT28 (724 aa).

Residues 1-22 lie on the Cytoplasmic side of the membrane; the sequence is MMERKREMGIAYFARRIKQPRG. Residues 23–43 form a helical; Signal-anchor for type II membrane protein membrane-spanning segment; that stretch reads IWVKMTFIVVLGLCFVFFWSF. Over 44 to 724 the chain is Lumenal; sequence LSSSASTFNV…LCAQKTLWRP (681 aa). The tract at residues 63–211 is disordered; the sequence is EPVSSRTKSA…ISKKRKRKGP (149 aa). The segment covering 71–98 has biased composition (basic and acidic residues); it reads SAHEVSESSKLHERGKVESGSKSKEGKK. The span at 107 to 125 shows a compositional bias: basic residues; it reads HETKKKKEHAVSHPHKKKD. Basic and acidic residues predominate over residues 126-140; the sequence is VPKPVVEEVVVKEDQ. Residues 141 to 173 are compositionally biased toward acidic residues; it reads EHEEAESDDSDQSNKEDGEEGTESDGNEGESDG. 3 N-linked (GlcNAc...) asparagine glycosylation sites follow: Asn-305, Asn-316, and Asn-568.

The protein belongs to the methyltransferase superfamily.

The protein localises to the golgi apparatus membrane. This Arabidopsis thaliana (Mouse-ear cress) protein is Probable methyltransferase PMT28.